The sequence spans 266 residues: Type III pantothenate kinase (266 aa).

11 to 18 (DIGNTSTV) is a binding site for ATP. Position 111–114 (111–114 (GADR)) interacts with substrate. Aspartate 113 (proton acceptor) is an active-site residue. Residue aspartate 135 participates in K(+) binding. Threonine 138 lines the ATP pocket. Threonine 190 contacts substrate.

The protein belongs to the type III pantothenate kinase family. Homodimer. NH4(+) is required as a cofactor. K(+) serves as cofactor.

The protein resides in the cytoplasm. The catalysed reaction is (R)-pantothenate + ATP = (R)-4'-phosphopantothenate + ADP + H(+). It participates in cofactor biosynthesis; coenzyme A biosynthesis; CoA from (R)-pantothenate: step 1/5. In terms of biological role, catalyzes the phosphorylation of pantothenate (Pan), the first step in CoA biosynthesis. This chain is Type III pantothenate kinase, found in Deinococcus geothermalis (strain DSM 11300 / CIP 105573 / AG-3a).